Here is a 371-residue protein sequence, read N- to C-terminus: Collectin-46 (371 aa).

The N-terminal stretch at 1 to 20 (MLLLPLSVLLLLTQPWRSLG) is a signal peptide. Positions 43–215 (PEGGLPGRDG…ERGAKGESGL (173 aa)) are disordered. The Collagen-like domain occupies 46–216 (GLPGRDGQDG…RGAKGESGLA (171 aa)). The span at 51–65 (DGQDGREGPQGEKGD) shows a compositional bias: basic and acidic residues. Asn-90 carries an N-linked (GlcNAc...) asparagine glycan. A compositionally biased stretch (low complexity) spans 113-128 (PAGREGPSGKQGSMGP). Residues 139–148 (GPKGGMGAPG) show a composition bias toward gly residues. The segment covering 170–191 (APGSAGVAGPAGAIGPQGPSGA) has biased composition (low complexity). A compositionally biased stretch (basic and acidic residues) spans 198-210 (KGDRGDPGERGAK). The Cell attachment site motif lies at 201-203 (RGD). The 99-residue stretch at 273–371 (QLCREAKGQL…SEPLLVICEF (99 aa)) folds into the C-type lectin domain. Intrachain disulfides connect Cys-275–Cys-369 and Cys-347–Cys-361.

This sequence belongs to the SFTPD family. In terms of assembly, oligomeric complex of 4 set of homotrimers. Hydroxylated. Highly expressed in thymus and liver.

The protein resides in the secreted. This Bos taurus (Bovine) protein is Collectin-46 (CL46).